The sequence spans 817 residues: Phospholipase D alpha 2 (817 aa).

One can recognise a C2 domain in the interval 1-130 (MAHLLLHGTL…LSGEAIERRL (130 aa)). A Ca(2+)-binding site is contributed by D192. In terms of domain architecture, PLD phosphodiesterase 1 spans 333–372 (YMITHHQKTVIVDHDMPVPRGGGSRRIVSFVGGLDLCDGR). Catalysis depends on residues H338, K340, and D345. A 1,2-diacyl-sn-glycero-3-phosphate is bound at residue H338. 2 residues coordinate Ca(2+): H378 and H412. A 1,2-diacyl-sn-glycero-3-phosphate is bound by residues Q529 and H668. Residues 663-690 (FMIYVHSKMMIVDDEYIIVGSANINQRS) enclose the PLD phosphodiesterase 2 domain. Catalysis depends on residues H668, K670, and D675. E730 lines the Ca(2+) pocket.

It belongs to the phospholipase D family. C2-PLD subfamily. Ca(2+) serves as cofactor.

It catalyses the reaction a 1,2-diacyl-sn-glycero-3-phosphocholine + H2O = a 1,2-diacyl-sn-glycero-3-phosphate + choline + H(+). In terms of biological role, hydrolyzes glycerol-phospholipids at the terminal phosphodiesteric bond. Plays an important role in various cellular processes. The protein is Phospholipase D alpha 2 (PLD2) of Oryza sativa subsp. japonica (Rice).